The chain runs to 532 residues: T-complex protein 1 subunit epsilon (532 aa).

The protein belongs to the TCP-1 chaperonin family. As to quaternary structure, component of the T-complex protein 1 (TCP1) complex.

It localises to the cytoplasm. In terms of biological role, molecular chaperone; assists the folding of proteins upon ATP hydrolysis. The sequence is that of T-complex protein 1 subunit epsilon (CCT5) from Encephalitozoon cuniculi (strain GB-M1) (Microsporidian parasite).